Here is a 56-residue protein sequence, read N- to C-terminus: Probable head completion protein 2 (56 aa).

The protein belongs to the skunalikevirus head completion protein 2 family.

It localises to the virion. Functionally, probably functions as a stopper that is part of the head-tail connector and that locks the viral DNA in the capsid. During assembly, functions as a docking platform which the preassembled tail can bind to. Plays a role in morphogenesis of the virion capsid after genome packaging. This Lactococcus lactis (Lactococcus lactis bacteriophage SK1) protein is Probable head completion protein 2.